The primary structure comprises 576 residues: MAGUK p55 subfamily member 7 (576 aa).

L27 domains lie at S10–E63 and P65–V122. The PDZ domain maps to I139–I220. In terms of domain architecture, SH3 spans D228–F298. Positions Y368 to E560 constitute a Guanylate kinase-like domain.

This sequence belongs to the MAGUK family.

The protein localises to the membrane. The protein resides in the cell junction. Its subcellular location is the tight junction. It is found in the adherens junction. Functionally, acts as an important adapter that promotes epithelial cell polarity and tight junction formation. Involved in the assembly of protein complexes at sites of cell-cell contact. The protein is MAGUK p55 subfamily member 7 (mpp7) of Xenopus tropicalis (Western clawed frog).